A 217-amino-acid chain; its full sequence is Imidazole glycerol phosphate synthase subunit HisH (217 aa).

The 213-residue stretch at 5–217 (RVGIINYGVG…LRLLANFLTL (213 aa)) folds into the Glutamine amidotransferase type-1 domain. C93 acts as the Nucleophile in catalysis. Residues H199 and E201 contribute to the active site.

As to quaternary structure, heterodimer of HisH and HisF.

Its subcellular location is the cytoplasm. It carries out the reaction 5-[(5-phospho-1-deoxy-D-ribulos-1-ylimino)methylamino]-1-(5-phospho-beta-D-ribosyl)imidazole-4-carboxamide + L-glutamine = D-erythro-1-(imidazol-4-yl)glycerol 3-phosphate + 5-amino-1-(5-phospho-beta-D-ribosyl)imidazole-4-carboxamide + L-glutamate + H(+). The catalysed reaction is L-glutamine + H2O = L-glutamate + NH4(+). The protein operates within amino-acid biosynthesis; L-histidine biosynthesis; L-histidine from 5-phospho-alpha-D-ribose 1-diphosphate: step 5/9. In terms of biological role, IGPS catalyzes the conversion of PRFAR and glutamine to IGP, AICAR and glutamate. The HisH subunit catalyzes the hydrolysis of glutamine to glutamate and ammonia as part of the synthesis of IGP and AICAR. The resulting ammonia molecule is channeled to the active site of HisF. The protein is Imidazole glycerol phosphate synthase subunit HisH of Helicobacter hepaticus (strain ATCC 51449 / 3B1).